The chain runs to 79 residues: Tau-theraphotoxin-Hs1a (79 aa).

6 cysteine pairs are disulfide-bonded: Cys-2–Cys-16, Cys-9–Cys-23, Cys-15–Cys-31, Cys-44–Cys-58, Cys-51–Cys-63, and Cys-57–Cys-71. 2 Domain repeats span residues 2-31 and 42-71; these read CAKEGEVCSWGKKCCDLDNFYCPMEFIPHC and TNCAKEGEVCGWGSKCCHGLDCPLAFIPYC. The tract at residues 2-71 is 2 X approximate repeats with cysteine pattern C-C-CC-C-C; it reads CAKEGEVCSW…DCPLAFIPYC (70 aa).

This sequence belongs to the neurotoxin 23 family. Double-knot toxin subfamily. In terms of assembly, interacts with TRPV1 (2 toxins (4 moieties) bind 1 channel (homotetramer)). Expressed by the venom gland.

The protein resides in the secreted. Functionally, selectively activates the heat-activated TRPV1 channel. It binds to TRPV1 in an open state-dependent manner, trapping it there to produce irreversible currents. It binds to the outer edge of the external pore of TRPV1 in a counterclockwise configuration, using a limited protein-protein interface and inserting hydrophobic residues into the bilayer. It also partitions naturally into membranes, with the two lobes exhibiting opposing energetics for membrane partitioning (K1) and channel activation (K2). In addition, the toxin disrupts a cluster of hydrophobic residues behind the selectivity filter that are critical for channel activation. This chain is Tau-theraphotoxin-Hs1a, found in Cyriopagopus schmidti (Chinese bird spider).